The sequence spans 197 residues: Imidazoleglycerol-phosphate dehydratase (197 aa).

It belongs to the imidazoleglycerol-phosphate dehydratase family.

It is found in the cytoplasm. The catalysed reaction is D-erythro-1-(imidazol-4-yl)glycerol 3-phosphate = 3-(imidazol-4-yl)-2-oxopropyl phosphate + H2O. Its pathway is amino-acid biosynthesis; L-histidine biosynthesis; L-histidine from 5-phospho-alpha-D-ribose 1-diphosphate: step 6/9. This is Imidazoleglycerol-phosphate dehydratase from Gloeobacter violaceus (strain ATCC 29082 / PCC 7421).